The primary structure comprises 392 residues: uncharacterized protein (392 aa).

The first 23 residues, 1–23 (MWTALVLVWISSVLLPRSHMMSA), serve as a signal peptide directing secretion. Over 24–342 (EPRNIVTNKW…DALTPSLVNK (319 aa)) the chain is Extracellular. An N-linked (GlcNAc...) asparagine glycan is attached at N77. Disordered regions lie at residues 83-154 (AEVT…PRTA) and 167-320 (AAGT…TDSC). Over residues 86–97 (TTHGTNTSTPTT) the composition is skewed to low complexity. Polar residues-rich tracts occupy residues 107–127 (SRTLAVPTSSGPSSAEQTRPT) and 170–249 (TVNT…SAST). N172 is a glycosylation site (N-linked (GlcNAc...) asparagine). 2 stretches are compositionally biased toward low complexity: residues 265-277 (SPTTQPSPTLPTQ) and 284-309 (TLLTTEQVGTKTTSGTASAGPTSRSS). The helical transmembrane segment at 343–363 (MLLLVVLLVGVTLFIAVLVMF) threads the bilayer. At 364-392 (ALQAYESYKKKDYTQVDYLINGMYADSEM) the chain is on the cytoplasmic side.

It localises to the cell membrane. Its subcellular location is the golgi apparatus. The protein localises to the trans-Golgi network membrane. This is an uncharacterized protein from Mus musculus (Mouse).